The primary structure comprises 211 residues: uncharacterized protein (211 aa).

Disordered regions lie at residues 1–73 and 96–123; these read MLRR…SKLK and TNAAKEEKLRMAPSPTQSTRSESDASLS. Polar residues-rich tracts occupy residues 26-35 and 53-62; these read SKSSLISLTS and APSQFLSPTN. Residues 63–73 show a composition bias toward low complexity; that stretch reads KRSTSSQSKLK. Residue Ser-182 is modified to Phosphoserine. Thr-184 carries the post-translational modification Phosphothreonine. Phosphoserine is present on Ser-186.

This is an uncharacterized protein from Saccharomyces cerevisiae (strain ATCC 204508 / S288c) (Baker's yeast).